Reading from the N-terminus, the 190-residue chain is Elongation factor P-like protein (190 aa).

The protein belongs to the elongation factor P family.

In Pseudoalteromonas atlantica (strain T6c / ATCC BAA-1087), this protein is Elongation factor P-like protein.